A 1041-amino-acid polypeptide reads, in one-letter code: Protein EGT2 (1041 aa).

Positions 1–20 are cleaved as a signal peptide; sequence MNKLLLHLVRVISILGLANA. N-linked (GlcNAc...) asparagine glycosylation is found at Asn-65, Asn-103, Asn-161, Asn-175, Asn-249, Asn-332, Asn-401, Asn-435, Asn-465, Asn-485, Asn-506, Asn-526, Asn-544, and Asn-556. Positions 388–410 are disordered; the sequence is SSSSISLSAPSSSNSTFTTPSSS. Residues 457–492 form repeat 1; that stretch reads SSTLSYTSNVTISVSSATQHTTTPSYVSNSTTLSSS. Residues 457–962 form a 9 X approximate repeats region; sequence SSTLSYTSNV…TLKTSTFQKA (506 aa). 2 tandem repeats follow at residues 577 to 606 and 613 to 647. N-linked (GlcNAc...) asparagine glycans are attached at residues Asn-635, Asn-636, Asn-657, and Asn-709. Repeat unit 4 spans residues 716-745; it reads TDKSDTYSVISSTESAQVTEYDSLLPISTL. Residue Asn-756 is glycosylated (N-linked (GlcNAc...) asparagine). 5 tandem repeats follow at residues 773–802, 811–840, 849–886, 887–924, and 925–962. Gly-1020 carries GPI-anchor amidated glycine lipidation. A propeptide spans 1021 to 1041 (removed in mature form); the sequence is AAGQLTIRIGSLLLGLISFLL.

In terms of processing, the GPI-anchor is attached to the protein in the endoplasmic reticulum and serves to target the protein to the cell surface. There, the glucosamine-inositol phospholipid moiety is cleaved off and the GPI-modified mannoprotein is covalently attached via its lipidless GPI glycan remnant to the 1,6-beta-glucan of the outer cell wall layer.

It is found in the secreted. The protein localises to the cell wall. It localises to the membrane. In terms of biological role, seems to be involved in the correct timing of cell separation after cytokinesis, as separation of mutant daughter cells is delayed. Could either be an enzyme necessary for glucans-degradation of the cell wall at the neck region between mother and daughter cells or a regulatory protein controlling this metabolic step. The protein is Protein EGT2 (EGT2) of Saccharomyces cerevisiae (strain ATCC 204508 / S288c) (Baker's yeast).